Here is a 418-residue protein sequence, read N- to C-terminus: L-rhamnose isomerase (418 aa).

Mn(2+) contacts are provided by His262, Asp294, and Asp296.

Belongs to the rhamnose isomerase family. Requires Mn(2+) as cofactor.

The protein resides in the cytoplasm. The enzyme catalyses L-rhamnopyranose = L-rhamnulose. It functions in the pathway carbohydrate degradation; L-rhamnose degradation; glycerone phosphate from L-rhamnose: step 1/3. Functionally, catalyzes the interconversion of L-rhamnose and L-rhamnulose. This is L-rhamnose isomerase from Bacteroides thetaiotaomicron (strain ATCC 29148 / DSM 2079 / JCM 5827 / CCUG 10774 / NCTC 10582 / VPI-5482 / E50).